A 314-amino-acid chain; its full sequence is DegV domain-containing protein XCC3382 (314 aa).

The region spanning 3-307 is the DegV domain; it reads IGIVVDSACD…KGALAVAFAA (305 aa). T63 and S96 together coordinate hexadecanoate.

Its function is as follows. May bind long-chain fatty acids, such as palmitate, and may play a role in lipid transport or fatty acid metabolism. The sequence is that of DegV domain-containing protein XCC3382 from Xanthomonas campestris pv. campestris (strain ATCC 33913 / DSM 3586 / NCPPB 528 / LMG 568 / P 25).